The primary structure comprises 459 residues: FBD-associated F-box protein At4g13985 (459 aa).

The 47-residue stretch at 18–64 folds into the F-box domain; it reads VDRLRNLPDCLLFKILLNLPTKDVVKLSVLSRRWRNVWRYVPGLDLE. In terms of domain architecture, FBD spans 375–429; that stretch reads KEGANILPGPRRFLTSLEYVKIAKPMAAEASEIKLKLVSYFLENSTILKKLTLCL.

In Arabidopsis thaliana (Mouse-ear cress), this protein is FBD-associated F-box protein At4g13985.